We begin with the raw amino-acid sequence, 556 residues long: Polyphenol oxidase 2 (556 aa).

Positions 57, 81, 90, 250, 254, and 282 each coordinate Cu cation. Positions 79-81 (CTH) form a cross-link, 2'-(S-cysteinyl)-histidine (Cys-His). Position 254 (histidine 254) interacts with substrate. Positions 379–556 (SKPSSGARNT…FDDVAVHVIN (178 aa)) are cleaved as a propeptide — removed in mature form.

Belongs to the tyrosinase family. In terms of assembly, heterotetramer. Requires Cu(2+) as cofactor. In terms of processing, the C-ter is probably cleaved after Gly-378 since the mature active protein is smaller than the protein encoded by the gene.

It catalyses the reaction 2 L-dopa + O2 = 2 L-dopaquinone + 2 H2O. The catalysed reaction is L-tyrosine + O2 = L-dopaquinone + H2O. Functionally, copper-containing oxidase that catalyzes both the o-hydroxylation of monophenols and the subsequent oxidation of the resulting o-diphenols into reactive o-quinones, which evolve spontaneously to produce intermediates, which associate in dark brown pigments. Involved in the initial step of melanin synthesis. Melanins constitute a mechanism of defense and resistance to stress such as UV radiations, free radicals, gamma rays, dehydratation and extreme temperatures, and contribute to the fungal cell-wall resistance against hydrolytic enzymes in avoiding cellular lysis. Fungal pigments are also involved in the formation and stability of spores. The chain is Polyphenol oxidase 2 (PPO2) from Agaricus bisporus (White button mushroom).